We begin with the raw amino-acid sequence, 256 residues long: UPF0246 protein HCH_04801 (256 aa).

Belongs to the UPF0246 family.

This chain is UPF0246 protein HCH_04801, found in Hahella chejuensis (strain KCTC 2396).